We begin with the raw amino-acid sequence, 816 residues long: Metabotropic glutamate receptor-like protein E (816 aa).

Residues Met1 to Ser27 form the signal peptide. The Extracellular segment spans residues Glu28–Asn436. Asn68, Asn311, and Asn388 each carry an N-linked (GlcNAc...) asparagine glycan. The chain crosses the membrane as a helical span at residues Ile437–Ile457. Residues Ala458–Pro469 lie on the Cytoplasmic side of the membrane. A helical transmembrane segment spans residues Leu470 to Leu490. Residues Pro491 to Pro496 lie on the Extracellular side of the membrane. Residues Leu497–Phe517 traverse the membrane as a helical segment. Residues Thr518 to Lys541 are Cytoplasmic-facing. A helical transmembrane segment spans residues Phe542–Thr562. The Extracellular portion of the chain corresponds to Ala563–Ala590. Residues Trp591–Phe611 traverse the membrane as a helical segment. The Cytoplasmic segment spans residues Lys612–Pro625. Residues Ile626 to Ile646 form a helical membrane-spanning segment. Topologically, residues Leu647 to Ala653 are extracellular. A helical membrane pass occupies residues Ile654–Phe674. Residues Leu675 to Lys816 lie on the Cytoplasmic side of the membrane. A disordered region spans residues Asp697–Lys718.

This sequence belongs to the G-protein coupled receptor 3 family.

Its subcellular location is the membrane. Its function is as follows. May be involved in early development in cAMP sensing and subsequent chemotactic response. Probable receptor of GABA and glutamate, leading respectively to the induction or inhibition of SDF-2 formation. The polypeptide is Metabotropic glutamate receptor-like protein E (grlE) (Dictyostelium discoideum (Social amoeba)).